The chain runs to 67 residues: uncharacterized protein (67 aa).

This is an uncharacterized protein from Measles virus (strain Halle) (MeV).